Here is a 442-residue protein sequence, read N- to C-terminus: Syndecan-3 (442 aa).

2 disordered regions span residues 1–24 (MKPGPPHRAGAAHGAGAGAGAAAG) and 57–87 (RPVDLEGSGDDDSFPDDELDDLYSGSGSGYF). Topologically, residues 1–387 (MKPGPPHRAG…SILERKEVLV (387 aa)) are extracellular. The span at 13–24 (HGAGAGAGAAAG) shows a compositional bias: gly residues. Over residues 63–77 (GSGDDDSFPDDELDD) the composition is skewed to acidic residues. O-linked (Xyl...) (glycosaminoglycan) serine glycosylation is found at S80, S82, S84, and S91. The O-linked (GalNAc) serine; by GALNT13 glycan is linked to S108. Residues T109 and T110 are each glycosylated (O-linked (GalNAc) threonine; by GALNT13). Disordered regions lie at residues 150–173 (EEPSQRATTVSTTMATTAATSTGD), 225–326 (TTPE…ETTQ), and 340–367 (AAKASSPPGTLPKGARPGPGLLDNAIDS). Composition is skewed to low complexity over residues 156 to 173 (ATTVSTTMATTAATSTGD), 225 to 238 (TTPEAPSPPTTAAV), and 275 to 286 (TLPLGTTAPGPT). S160 carries O-linked (GalNAc) serine; by GALNT13 glycosylation. 3 O-linked (GalNAc) threonine; by GALNT13 glycosylation sites follow: T161, T162, and T169. S170 is a glycosylation site (O-linked (GalNAc) serine; by GALNT13). O-linked (GalNAc) threonine; by GALNT13 glycosylation is present at T171. Positions 288–299 (VAQTPTPETFLT) are enriched in polar residues. 2 O-linked (Xyl...) (glycosaminoglycan) serine glycosylation sites follow: S314 and S367. Residues 388-408 (AVIVGGVVGALFAAFLVTLLI) traverse the membrane as a helical segment. A phosphotyrosine mark is found at Y409, Y419, Y431, and Y441. The Cytoplasmic portion of the chain corresponds to 409–442 (YRMKKKDEGSYTLEEPKQASVTYQKPDKQEEFYA). The interval 419-442 (YTLEEPKQASVTYQKPDKQEEFYA) is disordered. A compositionally biased stretch (basic and acidic residues) spans 433–442 (KPDKQEEFYA).

The protein belongs to the syndecan proteoglycan family. Interacts with TIAM1. Interacts with PTN (via heparan sulfate chains); this interaction mediates the neurite outgrowth-promoting signal from PTN to the cytoskeleton of growing neurites; this interaction mediates osteoblast recruitment. Interacts with MDK; this interaction induces SDC3 clustering; this interaction induces neuronal cell adhesion and neurite outgrowth. O-glycosylated within the Thr/Ser-rich region which could interact with lectin domains on other molecules. Expressed in the nervous system, the adrenal gland, and the spleen.

Its subcellular location is the cell membrane. Functionally, cell surface proteoglycan that may bear heparan sulfate. May have a role in the organization of cell shape by affecting the actin cytoskeleton, possibly by transferring signals from the cell surface in a sugar-dependent mechanism. The protein is Syndecan-3 (SDC3) of Homo sapiens (Human).